The sequence spans 457 residues: tRNA modification GTPase MnmE (457 aa).

(6S)-5-formyl-5,6,7,8-tetrahydrofolate contacts are provided by R23, E86, and R125. One can recognise a TrmE-type G domain in the interval 221 to 377; the sequence is GVSVLIAGKP…LREAVFETFI (157 aa). Residue N231 coordinates K(+). Residues 231-236, 250-256, and 275-278 contribute to the GTP site; these read NVGKSS, TSVPGTT, and DTAG. S235 provides a ligand contact to Mg(2+). Positions 250, 252, and 255 each coordinate K(+). Mg(2+) is bound at residue T256. Residue K457 coordinates (6S)-5-formyl-5,6,7,8-tetrahydrofolate.

The protein belongs to the TRAFAC class TrmE-Era-EngA-EngB-Septin-like GTPase superfamily. TrmE GTPase family. As to quaternary structure, homodimer. Heterotetramer of two MnmE and two MnmG subunits. K(+) serves as cofactor.

The protein resides in the cytoplasm. Exhibits a very high intrinsic GTPase hydrolysis rate. Involved in the addition of a carboxymethylaminomethyl (cmnm) group at the wobble position (U34) of certain tRNAs, forming tRNA-cmnm(5)s(2)U34. This is tRNA modification GTPase MnmE from Geobacter metallireducens (strain ATCC 53774 / DSM 7210 / GS-15).